Reading from the N-terminus, the 909-residue chain is MALTPMMKQYLEVKERNKDCILFFRLGDFYEMFFEDAETAARELELVLTGRDCGLENRAPMCGIPYHAANTYISRLITKGYKVAICEQLEDPSKAKGIVKRDVIKIYTPGTYSDASFLEETKNNYLMSLYLENELVCMAFADVSTGDFQCTYVKYNESSILDEISKFMPKEIVIIDSIDDTIIKAIKERFEVSFTVKNKDFFYLNASLNLKNQFPDFKEENYDDIVITGCNGLLNYIIETQKTTLIHINKLDYYETVDYLSIDINSRRNLELTETLRDKSKKGSLLWVLDKTTTAMGARLLRKWVEQPLIHKEIIENRQNAVEEILNNVPLLDDLRNNLKDVYDIERLAGKISSKTVNAKELLSLKNSIGNLPIIKKIIENYNTDLLKNIYSSLDCLEDLYSLLDNSILPSPALSIKEGGIIKDGYNKTIDELRMAKSHGTEWIASLEEQERNITGIKSLKVKYNKVFGYYIEITKSNLNQVPENRYIRKQTLANCERFITPELKEVEDKILGAQEKLMELEYNVFVEIRELIEKEIYRIKNTAKLISSIDVLQSLAIVALESNYSKPIIKLDGELLIKDGRHPVVEKMIPRDSFVSNDTILDNKDHQLLLITGPNMAGKSTYMRQVALITLMAQIGSFVPAKEAEIVICDKIFTRIGASDDLARGKSTFMVEMWEVANILNNATNKSLILLDEVGRGTSTYDGLSIAWAVIEYICKDNNLKSKTLFATHYHELTSLEGKIKGVKNYSIAVKKVDDDIIFLRKIIEGGADESYGIEVAKLAGIPSVVTNRAKEILNTLEENSPQNNDISKESSSSSNSHDKLESSVIKESESNIKTYDEISNLETNKIKEAQVEVAVEKEVTQDIKQIGFLDIEKEALIKEISSIDILNMTVKDCFDKLYDIINKAKSL.

An ATP-binding site is contributed by 614-621 (GPNMAGKS). The tract at residues 798-827 (LEENSPQNNDISKESSSSSNSHDKLESSVI) is disordered. The segment covering 818–827 (SHDKLESSVI) has biased composition (basic and acidic residues).

This sequence belongs to the DNA mismatch repair MutS family.

Functionally, this protein is involved in the repair of mismatches in DNA. It is possible that it carries out the mismatch recognition step. This protein has a weak ATPase activity. This chain is DNA mismatch repair protein MutS, found in Clostridium novyi (strain NT).